The following is a 242-amino-acid chain: Haloacid dehalogenase-like hydrolase domain-containing protein 3 (242 aa).

It belongs to the HAD-like hydrolase superfamily.

In Danio rerio (Zebrafish), this protein is Haloacid dehalogenase-like hydrolase domain-containing protein 3 (hdhd3).